The chain runs to 271 residues: 3-methyl-2-oxobutanoate hydroxymethyltransferase (271 aa).

Residues D53 and D92 each contribute to the Mg(2+) site. Residues 53–54, D92, and K120 each bind 3-methyl-2-oxobutanoate; that span reads DS. E122 serves as a coordination point for Mg(2+). Residue E189 is the Proton acceptor of the active site.

The protein belongs to the PanB family. In terms of assembly, homodecamer; pentamer of dimers. Mg(2+) serves as cofactor.

The protein resides in the cytoplasm. It catalyses the reaction 3-methyl-2-oxobutanoate + (6R)-5,10-methylene-5,6,7,8-tetrahydrofolate + H2O = 2-dehydropantoate + (6S)-5,6,7,8-tetrahydrofolate. It functions in the pathway cofactor biosynthesis; (R)-pantothenate biosynthesis; (R)-pantoate from 3-methyl-2-oxobutanoate: step 1/2. Functionally, catalyzes the reversible reaction in which hydroxymethyl group from 5,10-methylenetetrahydrofolate is transferred onto alpha-ketoisovalerate to form ketopantoate. The protein is 3-methyl-2-oxobutanoate hydroxymethyltransferase of Burkholderia vietnamiensis (strain G4 / LMG 22486) (Burkholderia cepacia (strain R1808)).